Here is a 355-residue protein sequence, read N- to C-terminus: Protein RecA (355 aa).

78 to 85 (GPESSGKT) provides a ligand contact to ATP.

This sequence belongs to the RecA family.

It localises to the cytoplasm. Its function is as follows. Can catalyze the hydrolysis of ATP in the presence of single-stranded DNA, the ATP-dependent uptake of single-stranded DNA by duplex DNA, and the ATP-dependent hybridization of homologous single-stranded DNAs. It interacts with LexA causing its activation and leading to its autocatalytic cleavage. The sequence is that of Protein RecA from Rhodobacter capsulatus (Rhodopseudomonas capsulata).